The chain runs to 294 residues: MTEKKHKNSLSLVHSIKEELKKDKLAMISTIFLVAVFLIVYIYSMFLKQSNYVDVNIMDQYLAPLTNGHLLGTDNGGRDIIMMLMISARNSFNIAFAVTLITLVVGNILGVITGYFGGRFDLIFMRFTDFVMILPSMMIIIVFVTIIPRFNSWSLIGIISIFSWIGTTRLIRARTMTEVNRDYVRASKTSGTSDFKIMFREIWPNLSTLVIAEATLVFAGNIGLETGLSFLGFGLPAGTPSLGTMINEATNPETMTDKPWTWVPATVVILIVVLAIIFIGNALRRVADQRQATR.

6 helical membrane passes run 27-47 (MIST…SMFL), 94-114 (IAFA…VITG), 127-147 (FTDF…VTII), 151-171 (NSWS…TRLI), 202-224 (IWPN…NIGL), and 260-280 (WTWV…IFIG). One can recognise an ABC transmembrane type-1 domain in the interval 88 to 280 (ARNSFNIAFA…IVVLAIIFIG (193 aa)).

It belongs to the binding-protein-dependent transport system permease family. OppBC subfamily. The complex is composed of two ATP-binding proteins (OppD and OppF), two transmembrane proteins (OppB and OppC) and a solute-binding protein (OppA).

It is found in the cell membrane. In terms of biological role, part of the ABC transporter complex OppABCDF involved in the uptake of oligopeptides. Probably responsible for the translocation of the substrate across the membrane. Essential for uptake of peptides larger than three amino acids and for growth in milk. In Lactococcus lactis subsp. lactis (strain IL1403) (Streptococcus lactis), this protein is Oligopeptide transport system permease protein OppC (oppC).